The sequence spans 336 residues: F420-dependent glucose-6-phosphate dehydrogenase (336 aa).

Position 39 (Asp39) interacts with coenzyme F420-(gamma-Glu)n. The Proton donor role is filled by His40. Residues Thr76 and 107 to 108 (TG) each bind coenzyme F420-(gamma-Glu)n. Catalysis depends on Glu109, which acts as the Proton acceptor. Coenzyme F420-(gamma-Glu)n is bound by residues Asn112, 177 to 178 (GG), and 180 to 181 (QV). Positions 195, 198, 259, and 283 each coordinate substrate.

Belongs to the F420-dependent glucose-6-phosphate dehydrogenase family. As to quaternary structure, homodimer.

It catalyses the reaction oxidized coenzyme F420-(gamma-L-Glu)(n) + D-glucose 6-phosphate + H(+) = 6-phospho-D-glucono-1,5-lactone + reduced coenzyme F420-(gamma-L-Glu)(n). Catalyzes the coenzyme F420-dependent oxidation of glucose 6-phosphate (G6P) to 6-phosphogluconolactone. Appears to have a role in resistance to oxidative stress, via its consumption of G6P that serves as a source of reducing power to combat oxidative stress in mycobacteria. This Mycolicibacterium gilvum (strain PYR-GCK) (Mycobacterium gilvum (strain PYR-GCK)) protein is F420-dependent glucose-6-phosphate dehydrogenase.